Consider the following 281-residue polypeptide: CCAAT/enhancer-binding protein epsilon (281 aa).

Residues 1–30 (MSHGTYYECEPRAGQQPLEFSGARAGPGEL) are disordered. A Glycyl lysine isopeptide (Lys-Gly) (interchain with G-Cter in SUMO2) cross-link involves residue Lys-121. Ser-181 carries the post-translational modification Phosphoserine. The bZIP domain occupies 204-267 (SLEYRLRRER…DTLRNLFRQI (64 aa)). The tract at residues 208 to 228 (RLRRERNNIAVRKSRDKAKRR) is basic motif. The tract at residues 230–237 (LETQQKVL) is leucine-zipper.

It belongs to the bZIP family. C/EBP subfamily. In terms of assembly, binds DNA as a homodimer and as a heterodimer. Can form stable heterodimers with CEBPA, CEBPB and CEBPD. Interacts with GATA1 and SPI1. Interacts with SMARCD2. Post-translationally, phosphorylated.

Its subcellular location is the nucleus. Transcriptional activator. C/EBP are DNA-binding proteins that recognize two different motifs: the CCAAT homology common to many promoters and the enhanced core homology common to many enhancers. Required for the promyelocyte-myelocyte transition in myeloid differentiation. The protein is CCAAT/enhancer-binding protein epsilon (CEBPE) of Ovis aries (Sheep).